We begin with the raw amino-acid sequence, 36 residues long: U14-ctenitoxin-Co1b (36 aa).

As to expression, expressed by the venom gland.

The protein resides in the secreted. In terms of biological role, not toxic to mice by intracerebroventricular injection. This is U14-ctenitoxin-Co1b from Ctenus ornatus (Brazilian spider).